A 469-amino-acid polypeptide reads, in one-letter code: UDP-N-acetylmuramate--L-alanine ligase (469 aa).

Position 112-118 (112-118 (GTHGKTT)) interacts with ATP.

It belongs to the MurCDEF family.

The protein resides in the cytoplasm. The catalysed reaction is UDP-N-acetyl-alpha-D-muramate + L-alanine + ATP = UDP-N-acetyl-alpha-D-muramoyl-L-alanine + ADP + phosphate + H(+). The protein operates within cell wall biogenesis; peptidoglycan biosynthesis. Cell wall formation. This is UDP-N-acetylmuramate--L-alanine ligase from Laribacter hongkongensis (strain HLHK9).